The primary structure comprises 804 residues: Probable replication endonuclease from prophage-like region (804 aa).

Catalysis depends on O-(5'-phospho-DNA)-tyrosine intermediate residues Tyr498 and Tyr502.

Belongs to the phage GPA family.

Its function is as follows. Possible endonuclease which induces a single-strand cut and initiates DNA replication. The protein is Probable replication endonuclease from prophage-like region of Escherichia coli O6:H1 (strain CFT073 / ATCC 700928 / UPEC).